The primary structure comprises 609 residues: UvrABC system protein C (609 aa).

The GIY-YIG domain maps to 15–92 (TGSGVYQIQD…IKQFRPRYNV (78 aa)). The region spanning 202–237 (DQVIIKLTERMEVASENLVFEEAAHYRDQIRQLRRL) is the UVR domain.

The protein belongs to the UvrC family. As to quaternary structure, interacts with UvrB in an incision complex.

It is found in the cytoplasm. The UvrABC repair system catalyzes the recognition and processing of DNA lesions. UvrC both incises the 5' and 3' sides of the lesion. The N-terminal half is responsible for the 3' incision and the C-terminal half is responsible for the 5' incision. This is UvrABC system protein C from Coxiella burnetii (strain Dugway 5J108-111).